The primary structure comprises 234 residues: UPF0104 membrane protein MJ1078 (234 aa).

The next 5 membrane-spanning stretches (helical) occupy residues 32–52 (VGTV…LLFI), 70–90 (IKWG…FLIV), 123–143 (LITL…FIFL), 164–184 (LTAI…LIYI), and 198–218 (VLIL…AIMF).

The protein belongs to the UPF0104 family.

It localises to the cell membrane. The chain is UPF0104 membrane protein MJ1078 from Methanocaldococcus jannaschii (strain ATCC 43067 / DSM 2661 / JAL-1 / JCM 10045 / NBRC 100440) (Methanococcus jannaschii).